The following is an 803-amino-acid chain: Nucleoporin nup82 (803 aa).

As to quaternary structure, component of the nuclear pore complex (NPC). NPC constitutes the exclusive means of nucleocytoplasmic transport. NPCs allow the passive diffusion of ions and small molecules and the active, nuclear transport receptor-mediated bidirectional transport of macromolecules such as proteins, RNAs, ribonucleoparticles (RNPs), and ribosomal subunits across the nuclear envelope.

Its subcellular location is the nucleus. The protein resides in the nuclear pore complex. The protein localises to the nucleus membrane. Functionally, functions as a component of the nuclear pore complex (NPC). NPC components, collectively referred to as nucleoporins (NUPs), can play the role of both NPC structural components and of docking or interaction partners for transiently associated nuclear transport factors. The protein is Nucleoporin nup82 of Schizosaccharomyces pombe (strain 972 / ATCC 24843) (Fission yeast).